We begin with the raw amino-acid sequence, 88 residues long: Phosphocarrier protein HPr (88 aa).

Residues 1 to 88 form the HPr domain; it reads MAQKTFTVTA…DTMSKEGLGE (88 aa). Ser-12 carries the phosphoserine modification. Catalysis depends on His-15, which acts as the Pros-phosphohistidine intermediate. Phosphoserine; by HPrK/P is present on Ser-46.

Belongs to the HPr family.

Its subcellular location is the cytoplasm. Its activity is regulated as follows. Phosphorylation on Ser-46 inhibits the phosphoryl transfer from enzyme I to HPr. Its function is as follows. General (non sugar-specific) component of the phosphoenolpyruvate-dependent sugar phosphotransferase system (sugar PTS). This major carbohydrate active-transport system catalyzes the phosphorylation of incoming sugar substrates concomitantly with their translocation across the cell membrane. The phosphoryl group from phosphoenolpyruvate (PEP) is transferred to the phosphoryl carrier protein HPr by enzyme I. Phospho-HPr then transfers it to the PTS EIIA domain. In terms of biological role, P-Ser-HPr interacts with the catabolite control protein A (CcpA), forming a complex that binds to DNA at the catabolite response elements cre, operator sites preceding a large number of catabolite-regulated genes. Thus, P-Ser-HPr is a corepressor in carbon catabolite repression (CCR), a mechanism that allows bacteria to coordinate and optimize the utilization of available carbon sources. P-Ser-HPr also plays a role in inducer exclusion, in which it probably interacts with several non-PTS permeases and inhibits their transport activity. The chain is Phosphocarrier protein HPr (ptsH) from Priestia megaterium (Bacillus megaterium).